Reading from the N-terminus, the 244-residue chain is Small ribosomal subunit protein uS3 (244 aa).

A KH type-2 domain is found at 39–107 (VREMLRKKLA…PAHINVTEVR (69 aa)). A disordered region spans residues 213–244 (VGQEKQDDSPRNDRNDRGDRGDRPSRPAREAR). A compositionally biased stretch (basic and acidic residues) spans 216 to 244 (EKQDDSPRNDRNDRGDRGDRPSRPAREAR).

This sequence belongs to the universal ribosomal protein uS3 family. As to quaternary structure, part of the 30S ribosomal subunit. Forms a tight complex with proteins S10 and S14.

Binds the lower part of the 30S subunit head. Binds mRNA in the 70S ribosome, positioning it for translation. In Xanthomonas oryzae pv. oryzae (strain MAFF 311018), this protein is Small ribosomal subunit protein uS3.